The chain runs to 216 residues: Redox-sensing transcriptional repressor Rex (216 aa).

A DNA-binding region (H-T-H motif) is located at residues Q20–F59. Residue G94 to G99 participates in NAD(+) binding.

Belongs to the transcriptional regulatory Rex family. As to quaternary structure, homodimer.

The protein localises to the cytoplasm. Modulates transcription in response to changes in cellular NADH/NAD(+) redox state. In Lactococcus lactis subsp. cremoris (Streptococcus cremoris), this protein is Redox-sensing transcriptional repressor Rex.